A 962-amino-acid chain; its full sequence is MAATSFNVRDLINSNGADAMGVRGLVDAHATKAAEEQFEYIKRSKKVWVRQILSASDGEKMQKRFGGTFDLQLSKNLCPHSFAGAMRQCETLECLSSFPEDSLILDFGGSWLFHWQRQHNVHSCCPVLDARDMARHQERMISMQKCVAHRPGKFESFESPDFCLLKAEDCEVQSPYAISIHGAYDMGFEGLCKAMHSHGTIMLRGTMMFDANMLVFNEGVMEDLNCRWTKEKGDPYGLRGAPCEDMVHFDFIDESTLSYSHSWKNIKSFLTEGGYQIGNVQYVLERCVISYGIMSFKIFAVSGKIPHTRLRHCVWFPKVRDYVNINPSDPRIWSKVRVKLDTVREVEEICFRCPKDVSKIEVMGGESETCGIMSVLYSSTIIVNGMTMMAGERLDVLDYHHVAFSLMLSARRKFDMFGKAMNSLEWKGWVSHFFKSLWPSGDLRDLFGRYFPSLIRYYDKIEFVEKLTHCEVFVNELGMTDDKEQRDVVAEAADVLKNTLLKVAIKMSLDKTFRPAEEKKEERTTTTTVTSSAVGDVDERPAGTVSGPTIQAPSVTQENTVTSLSEPLDGRLAVRLEAMKEYKRYLLKLQKNTESNLAGLWSLCGGTSDSNNLISTEVLRIMRQSDSLVNLHKADGGWLFPNDFEYMVGYNSSGLGEKRPNEVFLVNKDCVLNNNVLLANGVPAQPPKGNINLMDGVAGCGKTTAIKRAFVFESDLIVTANKKSSEDILKAMFRDTPDIGRNKVRTADSVLMHGVAHKVKRVLFDEVSLVHFGQLCAILTISGAEELIGFGDSEQISFVSRDRLFDMKYHKLSPDSSDQQIRTFRCPKDVVECVKIMARKVGARGSKYNNWFTTSAVRKSLGYHKVSSINESPLRPDVHYLTMTQADKASLLSKARETRFRPSVSTIDEVIKTTHESQGISVPKVILWRGKSTKCDLFTDKMELRFGCCHQASRKFRLLFGC.

The Alphavirus-like MT domain maps to 71-270; it reads LQLSKNLCPH…HSWKNIKSFL (200 aa). A methyltransferase region spans residues 79–356; that stretch reads PHSFAGAMRQ…EEICFRCPKD (278 aa). The tract at residues 536-561 is disordered; the sequence is DVDERPAGTVSGPTIQAPSVTQENTV. A compositionally biased stretch (polar residues) spans 546 to 561; sequence SGPTIQAPSVTQENTV. A (+)RNA virus helicase ATP-binding domain is found at 667–820; sequence NKDCVLNNNV…KLSPDSSDQQ (154 aa). The segment at 693–941 is ATP-dependent helicase; that stretch reads LMDGVAGCGK…STKCDLFTDK (249 aa). The (+)RNA virus helicase C-terminal domain maps to 821 to 962; sequence IRTFRCPKDV…SRKFRLLFGC (142 aa).

It belongs to the bromoviridae replication protein 1a family. As to quaternary structure, interacts with RNA-directed RNA polymerase 2a.

It is found in the host endoplasmic reticulum membrane. In terms of biological role, involved in the virus replication. Contains a helicase domain and a methyltransferase domain. The methyltransferase domain is probably involved in viral RNA capping. Involved in the formation of ER membrane spherular invaginations in which RNA replication complexes form. The sequence is that of Replication protein 1a from Solanum lycopersicum (Tomato).